The chain runs to 142 residues: Universal stress protein D (142 aa).

Belongs to the universal stress protein A family.

The protein resides in the cytoplasm. Functionally, required for resistance to DNA-damaging agents. The protein is Universal stress protein D (uspD) of Escherichia coli (strain K12).